We begin with the raw amino-acid sequence, 98 residues long: NADH-ubiquinone oxidoreductase chain 4L (98 aa).

Helical transmembrane passes span 1–21 (MSIT…GMFT), 29–49 (SLLC…IVSL), and 61–81 (VILL…LVMV).

This sequence belongs to the complex I subunit 4L family. As to quaternary structure, core subunit of respiratory chain NADH dehydrogenase (Complex I) which is composed of 45 different subunits.

It localises to the mitochondrion inner membrane. It catalyses the reaction a ubiquinone + NADH + 5 H(+)(in) = a ubiquinol + NAD(+) + 4 H(+)(out). Functionally, core subunit of the mitochondrial membrane respiratory chain NADH dehydrogenase (Complex I) which catalyzes electron transfer from NADH through the respiratory chain, using ubiquinone as an electron acceptor. Part of the enzyme membrane arm which is embedded in the lipid bilayer and involved in proton translocation. This is NADH-ubiquinone oxidoreductase chain 4L (MT-ND4L) from Ochotona collaris (Collared pika).